A 628-amino-acid chain; its full sequence is F-box only protein 21 (628 aa).

In terms of domain architecture, F-box spans 28-84; the sequence is SCLVNLPGEVLEYILCCGSLTAADIGRVSSTCRRLRELCQSSGKVWKEQFRVRWPSL.

As to quaternary structure, directly interacts with SKP1 and CUL1.

Functionally, substrate-recognition component of the SCF (SKP1-CUL1-F-box protein)-type E3 ubiquitin ligase complex. The sequence is that of F-box only protein 21 (FBXO21) from Homo sapiens (Human).